The following is a 179-amino-acid chain: Small heat shock protein hspK (179 aa).

A sHSP domain is found at 32 to 178 (HRINIWRPTV…DRLKIPIQSK (147 aa)). The tract at residues 80 to 122 (KKSKGGLNNLPSSSSSINSDSTTNTNTNTTTTTTTAPPPPSDA) is disordered. Residues 87–114 (NNLPSSSSSINSDSTTNTNTNTTTTTTT) show a composition bias toward low complexity.

This sequence belongs to the small heat shock protein (HSP20) family.

In Dictyostelium discoideum (Social amoeba), this protein is Small heat shock protein hspK (hspK).